A 710-amino-acid chain; its full sequence is Phosphoribosylformylglycinamidine synthase subunit PurL (710 aa).

Histidine 36 is a catalytic residue. The ATP site is built by tyrosine 39 and lysine 80. Glutamate 82 is a binding site for Mg(2+). Substrate is bound by residues serine 83–histidine 86 and arginine 105. The active-site Proton acceptor is the histidine 84. Residue aspartate 106 coordinates Mg(2+). Glutamine 226 lines the substrate pocket. Aspartate 252 contacts Mg(2+). Residue glutamate 294–glutamine 296 participates in substrate binding. ATP is bound by residues aspartate 470 and glycine 507. Serine 510 serves as a coordination point for substrate.

Belongs to the FGAMS family. In terms of assembly, monomer. Part of the FGAM synthase complex composed of 1 PurL, 1 PurQ and 2 PurS subunits.

The protein localises to the cytoplasm. The catalysed reaction is N(2)-formyl-N(1)-(5-phospho-beta-D-ribosyl)glycinamide + L-glutamine + ATP + H2O = 2-formamido-N(1)-(5-O-phospho-beta-D-ribosyl)acetamidine + L-glutamate + ADP + phosphate + H(+). It functions in the pathway purine metabolism; IMP biosynthesis via de novo pathway; 5-amino-1-(5-phospho-D-ribosyl)imidazole from N(2)-formyl-N(1)-(5-phospho-D-ribosyl)glycinamide: step 1/2. Its function is as follows. Part of the phosphoribosylformylglycinamidine synthase complex involved in the purines biosynthetic pathway. Catalyzes the ATP-dependent conversion of formylglycinamide ribonucleotide (FGAR) and glutamine to yield formylglycinamidine ribonucleotide (FGAM) and glutamate. The FGAM synthase complex is composed of three subunits. PurQ produces an ammonia molecule by converting glutamine to glutamate. PurL transfers the ammonia molecule to FGAR to form FGAM in an ATP-dependent manner. PurS interacts with PurQ and PurL and is thought to assist in the transfer of the ammonia molecule from PurQ to PurL. This chain is Phosphoribosylformylglycinamidine synthase subunit PurL, found in Sulfolobus acidocaldarius (strain ATCC 33909 / DSM 639 / JCM 8929 / NBRC 15157 / NCIMB 11770).